The chain runs to 199 residues: Peptidyl-tRNA hydrolase (199 aa).

TRNA is bound at residue Tyr-15. His-20 serves as the catalytic Proton acceptor. Residues Tyr-66, Asn-68, and Asn-114 each contribute to the tRNA site.

It belongs to the PTH family. Monomer.

Its subcellular location is the cytoplasm. The enzyme catalyses an N-acyl-L-alpha-aminoacyl-tRNA + H2O = an N-acyl-L-amino acid + a tRNA + H(+). Functionally, hydrolyzes ribosome-free peptidyl-tRNAs (with 1 or more amino acids incorporated), which drop off the ribosome during protein synthesis, or as a result of ribosome stalling. Catalyzes the release of premature peptidyl moieties from peptidyl-tRNA molecules trapped in stalled 50S ribosomal subunits, and thus maintains levels of free tRNAs and 50S ribosomes. The polypeptide is Peptidyl-tRNA hydrolase (Burkholderia cenocepacia (strain HI2424)).